The following is a 266-amino-acid chain: UPF0246 protein Pcryo_0542 (266 aa).

This sequence belongs to the UPF0246 family.

This Psychrobacter cryohalolentis (strain ATCC BAA-1226 / DSM 17306 / VKM B-2378 / K5) protein is UPF0246 protein Pcryo_0542.